The sequence spans 1486 residues: Chromosome partition protein MukB (1486 aa).

ATP is bound at residue 34 to 41 (GGNGAGKS). Coiled-coil stretches lie at residues 326-418 (LEAD…QYNQ), 444-480 (LETF…QAYQ), and 509-603 (RHLA…RAPV). Residues 666-783 (PGGSEDQRLN…EVPLFGRAAR (118 aa)) are flexible hinge. Coiled-coil stretches lie at residues 835–923 (EAEI…AKLE), 977–1115 (EMLS…TAKA), and 1209–1266 (VEAI…QNVS).

Belongs to the SMC family. MukB subfamily. As to quaternary structure, homodimerization via its hinge domain. Binds to DNA via its C-terminal region. Interacts, and probably forms a ternary complex, with MukE and MukF via its C-terminal region. The complex formation is stimulated by calcium or magnesium. Interacts with tubulin-related protein FtsZ.

It is found in the cytoplasm. Its subcellular location is the nucleoid. Its function is as follows. Plays a central role in chromosome condensation, segregation and cell cycle progression. Functions as a homodimer, which is essential for chromosome partition. Involved in negative DNA supercoiling in vivo, and by this means organize and compact chromosomes. May achieve or facilitate chromosome segregation by condensation DNA from both sides of a centrally located replisome during cell division. This chain is Chromosome partition protein MukB, found in Escherichia coli (strain 55989 / EAEC).